A 48-amino-acid chain; its full sequence is Sulfide dehydrogenase [flavocytochrome c] flavoprotein chain (48 aa).

40–46 (VTCPFSN) contributes to the FAD binding site.

In terms of assembly, dimer of one cytochrome and one flavoprotein.

It is found in the periplasm. It catalyses the reaction hydrogen sulfide + 2 Fe(III)-[cytochrome c] = sulfur + 2 Fe(II)-[cytochrome c] + H(+). The sequence is that of Sulfide dehydrogenase [flavocytochrome c] flavoprotein chain from Chlorobaculum thiosulfatiphilum (Chlorobium limicola f.sp. thiosulfatophilum).